A 150-amino-acid chain; its full sequence is Con-Ins Im1 (150 aa).

An N-terminal signal peptide occupies residues 1 to 25 (MATSLLSPLLVAMLGFLLHVHVARA). Disulfide bonds link C31–C133, C46–C136, C58–C149, and C135–C140. A propeptide spans 64-111 (GYAGGQRQLRKRTSMIDSDDMEAEGGSRGGFLMSKRRALSYLQKETNP) (c peptide). A 4-carboxyglutamate; partial modification is found at E144.

Belongs to the insulin family. Heterodimer of A and B chains; disulfide-linked. Expressed by the venom gland.

The protein resides in the secreted. This venom insulin facilitates prey capture by rapidly inducing hypoglycemic shock. Intraperitoneal injection of this peptide into zebrafish lowers blood glucose with the same potency than human insulin. In vivo, when applied to water, this peptide reduces overall locomotor activity of zebrafish larvae, observed as a significant decrease in the percentage of time spent swimming and movement frequency. The chain is Con-Ins Im1 from Conus imperialis (Imperial cone).